The following is a 182-amino-acid chain: CASP-like protein 5B1 (182 aa).

The disordered stretch occupies residues 1–20 (GDASHAVDHPIGGHPEHEHD). Topologically, residues 1 to 41 (GDASHAVDHPIGGHPEHEHDLREEEGPLIFPMKDLPGTPGT) are cytoplasmic. A helical membrane pass occupies residues 42-62 (VGGLALRMGQFIFAAASVVIM). The Extracellular segment spans residues 63 to 73 (VTSDEFINFTA). An N-linked (GlcNAc...) asparagine glycan is attached at asparagine 70. The chain crosses the membrane as a helical span at residues 74–94 (FCYLAAAMALQFLWSFVLATI). The Cytoplasmic portion of the chain corresponds to 95–108 (DVYALLIKRGLPNS). The chain crosses the membrane as a helical span at residues 109 to 129 (ILLSLFVVGDWVTATLSLAAA). Over 130–159 (CSTAGITVLFDKDLNYCDQMHCRRYQLSAT) the chain is Extracellular. Residues 160-180 (MAFFSWVLIAISSLITLLLLV) form a helical membrane-spanning segment. The Cytoplasmic portion of the chain corresponds to 181–182 (SE).

Belongs to the Casparian strip membrane proteins (CASP) family. Homodimer and heterodimers.

Its subcellular location is the cell membrane. The protein is CASP-like protein 5B1 of Picea sitchensis (Sitka spruce).